The chain runs to 119 residues: Bombesin (119 aa).

The N-terminal stretch at 1–29 (MSAIPLNRILPLGFLFHLLIFSFISLSSC) is a signal peptide. Residues 30 to 44 (MEFVEDPNNQGRISL) constitute a propeptide that is removed on maturation. At Met-58 the chain carries Methionine amide. Residues 62–119 (SLQDTDFEEMESFAKRNVENMRAALLQEQNRAESERELRHAQLVVRNILEQYLKNMQN) constitute a propeptide that is removed on maturation.

The protein belongs to the bombesin/neuromedin-B/ranatensin family. In terms of tissue distribution, localized to the cutaneous granular glands in the skin and the brain.

It is found in the secreted. Stimulates smooth muscle contraction. Role in induction of hypothermia, stimulation of DNA replication and release of many gastrointestinal hormones. The sequence is that of Bombesin from Bombina orientalis (Oriental fire-bellied toad).